Reading from the N-terminus, the 60-residue chain is Large ribosomal subunit protein uL30 (60 aa).

This sequence belongs to the universal ribosomal protein uL30 family. In terms of assembly, part of the 50S ribosomal subunit.

This chain is Large ribosomal subunit protein uL30, found in Staphylococcus epidermidis (strain ATCC 35984 / DSM 28319 / BCRC 17069 / CCUG 31568 / BM 3577 / RP62A).